The sequence spans 343 residues: Anthranilate phosphoribosyltransferase (343 aa).

5-phospho-alpha-D-ribose 1-diphosphate is bound by residues Gly-86, 89-90 (GD), Thr-94, 96-99 (NIST), 114-122 (KHGNRSASG), and Ser-126. Residue Gly-86 participates in anthranilate binding. Ser-98 serves as a coordination point for Mg(2+). Asn-117 is an anthranilate binding site. Residue Arg-172 participates in anthranilate binding. Residues Asp-231 and Glu-232 each coordinate Mg(2+).

This sequence belongs to the anthranilate phosphoribosyltransferase family. In terms of assembly, homodimer. Mg(2+) is required as a cofactor.

It catalyses the reaction N-(5-phospho-beta-D-ribosyl)anthranilate + diphosphate = 5-phospho-alpha-D-ribose 1-diphosphate + anthranilate. Its pathway is amino-acid biosynthesis; L-tryptophan biosynthesis; L-tryptophan from chorismate: step 2/5. Catalyzes the transfer of the phosphoribosyl group of 5-phosphorylribose-1-pyrophosphate (PRPP) to anthranilate to yield N-(5'-phosphoribosyl)-anthranilate (PRA). This chain is Anthranilate phosphoribosyltransferase, found in Synechococcus sp. (strain JA-3-3Ab) (Cyanobacteria bacterium Yellowstone A-Prime).